The sequence spans 180 residues: UPF0340 protein llmg_0465 (180 aa).

This sequence belongs to the UPF0340 family.

In Lactococcus lactis subsp. cremoris (strain MG1363), this protein is UPF0340 protein llmg_0465.